The sequence spans 541 residues: Membrane protein insertase YidC (541 aa).

The helical transmembrane segment at 6–26 (SLLVLALIFISFLVYQQWQLD) threads the bilayer. A disordered region spans residues 34-56 (EQTTSITATSDVPASSPSNSQAI). 4 consecutive transmembrane segments (helical) span residues 337 to 357 (FWLLTFIQGIVSNWGLAIICV), 416 to 436 (LGGCLPILLQMPIFIALYWTF), 454 to 474 (LSAQDPYYILPILMGISMFLL), and 495 to 515 (PLIFMVFFLWFPSGLVLYWLV).

It belongs to the OXA1/ALB3/YidC family. Type 1 subfamily. Interacts with the Sec translocase complex via SecD. Specifically interacts with transmembrane segments of nascent integral membrane proteins during membrane integration.

It localises to the cell inner membrane. Functionally, required for the insertion and/or proper folding and/or complex formation of integral membrane proteins into the membrane. Involved in integration of membrane proteins that insert both dependently and independently of the Sec translocase complex, as well as at least some lipoproteins. Aids folding of multispanning membrane proteins. The protein is Membrane protein insertase YidC of Haemophilus influenzae (strain PittEE).